The following is a 412-amino-acid chain: Multifunctional CCA protein (412 aa).

The ATP site is built by Gly8 and Arg11. CTP-binding residues include Gly8 and Arg11. Mg(2+) is bound by residues Asp21 and Asp23. ATP is bound by residues Arg91, Arg137, and Arg140. CTP-binding residues include Arg91, Arg137, and Arg140. Positions 228–329 (TGIHTLMTLS…VKLFDSIDAW (102 aa)) constitute an HD domain.

It belongs to the tRNA nucleotidyltransferase/poly(A) polymerase family. Bacterial CCA-adding enzyme type 1 subfamily. Monomer. Can also form homodimers and oligomers. It depends on Mg(2+) as a cofactor. The cofactor is Ni(2+).

It catalyses the reaction a tRNA precursor + 2 CTP + ATP = a tRNA with a 3' CCA end + 3 diphosphate. It carries out the reaction a tRNA with a 3' CCA end + 2 CTP + ATP = a tRNA with a 3' CCACCA end + 3 diphosphate. Catalyzes the addition and repair of the essential 3'-terminal CCA sequence in tRNAs without using a nucleic acid template. Adds these three nucleotides in the order of C, C, and A to the tRNA nucleotide-73, using CTP and ATP as substrates and producing inorganic pyrophosphate. tRNA 3'-terminal CCA addition is required both for tRNA processing and repair. Also involved in tRNA surveillance by mediating tandem CCA addition to generate a CCACCA at the 3' terminus of unstable tRNAs. While stable tRNAs receive only 3'-terminal CCA, unstable tRNAs are marked with CCACCA and rapidly degraded. This is Multifunctional CCA protein from Escherichia coli O7:K1 (strain IAI39 / ExPEC).